Consider the following 363-residue polypeptide: Sensor protein BasS (363 aa).

The Cytoplasmic segment spans residues 1 to 13; that stretch reads MHFLRRPISLRQR. Residues 14 to 34 traverse the membrane as a helical segment; sequence LILTIGAILLVFELISVFWLW. Topologically, residues 35-64 are periplasmic; the sequence is HESTEQIQLFEQALRDNRNNDRHIMREIRE. A helical membrane pass occupies residues 65–88; that stretch reads AVASLIVPGVFMVSLTLFICYQAV. Residues 89-141 form the HAMP domain; the sequence is RRITRPLAELQKELEARTADNLTPIAIHSATLEIEAVVSALNDLVSRLTSTLD. The Cytoplasmic portion of the chain corresponds to 89–363; sequence RRITRPLAEL…KKDQYVANQI (275 aa). A Histidine kinase domain is found at 149-357; it reads DVAHELRTPL…RAWVRLKKDQ (209 aa). Phosphohistidine; by autocatalysis is present on His152.

Post-translationally, autophosphorylated.

Its subcellular location is the cell inner membrane. The enzyme catalyses ATP + protein L-histidine = ADP + protein N-phospho-L-histidine.. In terms of biological role, member of the two-component regulatory system BasS/BasR Autophosphorylates and activates BasR by phosphorylation. The protein is Sensor protein BasS (basS) of Escherichia coli (strain K12).